The sequence spans 379 residues: Multicilin (379 aa).

Residues 1–129 (MQACEGSAAG…AMDDLIADSS (129 aa)) are necessary and sufficient for its degradation during the cell cycle. Disordered stretches follow at residues 26–71 (SRRT…APLP) and 88–107 (LGTEASPSGDSSASQNPSLQ). Over residues 92-107 (ASPSGDSSASQNPSLQ) the composition is skewed to polar residues. The interval 130-379 (SLMSPPLTNS…GGYKFRWVPS (250 aa)) is necessary and sufficient for proper nuclear localization. Residues 171–241 (PPPTEQYWKE…SVLDKLMITQ (71 aa)) form a necessary and sufficient for interaction with GMNN and sufficient for homodimerization region. Positions 175 to 223 (EQYWKEVADQNQRALGTALIENNQLHVTLTQKQEEIASLRERNVQLKEL) form a coiled coil. The span at 291-309 (NRDPKRPRLQPEPDSKDCS) shows a compositional bias: basic and acidic residues. A disordered region spans residues 291 to 312 (NRDPKRPRLQPEPDSKDCSSRN).

The protein belongs to the geminin family. As to quaternary structure, heterodimer (via coiled-coil domain) with GMNN (via coiled-coil domain); targets GMNN to the nucleus. Can form homodimers (in vitro, via coiled-coil domain), but these are much less stable than the heterodimer formed with GMNN.

The protein resides in the nucleus. Transcription regulator specifically required for multiciliate cell differentiation. Acts in a multiprotein complex containing E2F4 and E2F5 that binds and activates genes required for centriole biogenesis. Required for the deuterosome-mediated acentriolar pathway. Plays a role in mitotic cell cycle progression by promoting cell cycle exit. Modulates GMNN activity by reducing its affinity for CDT1. This is Multicilin (Mcidas) from Mus musculus (Mouse).